The sequence spans 238 residues: Large ribosomal subunit protein uL1 (238 aa).

The protein belongs to the universal ribosomal protein uL1 family. In terms of assembly, part of the 50S ribosomal subunit.

Its function is as follows. Binds directly to 23S rRNA. The L1 stalk is quite mobile in the ribosome, and is involved in E site tRNA release. In terms of biological role, protein L1 is also a translational repressor protein, it controls the translation of the L11 operon by binding to its mRNA. This is Large ribosomal subunit protein uL1 from Saccharopolyspora erythraea (strain ATCC 11635 / DSM 40517 / JCM 4748 / NBRC 13426 / NCIMB 8594 / NRRL 2338).